Here is a 202-residue protein sequence, read N- to C-terminus: Oligoribonuclease (202 aa).

Residues Leu2–Leu166 form the Exonuclease domain. Tyr123 is an active-site residue.

It belongs to the oligoribonuclease family.

Its subcellular location is the cytoplasm. 3'-to-5' exoribonuclease specific for small oligoribonucleotides. The chain is Oligoribonuclease from Cutibacterium acnes (strain DSM 16379 / KPA171202) (Propionibacterium acnes).